Reading from the N-terminus, the 528-residue chain is Putative B3 domain-containing protein REM15 (528 aa).

DNA-binding regions (TF-B3) lie at residues 3-95 (HQHF…LGPS) and 135-231 (CFVA…LPNE). The segment at 234–253 (EEANEVSLPEEPESDAERNL) is disordered. 2 DNA-binding regions (TF-B3) span residues 279 to 376 (CFVA…IPNE) and 425 to 522 (QSSL…FCSK).

It localises to the nucleus. The chain is Putative B3 domain-containing protein REM15 (REM15.15) from Arabidopsis thaliana (Mouse-ear cress).